A 277-amino-acid polypeptide reads, in one-letter code: Large ribosomal subunit protein uL2 (277 aa).

Disordered regions lie at residues 28-55 (EPEK…RHRG) and 207-277 (KAGR…RTQG). Basic residues-rich tracts occupy residues 34 to 43 (THHKHSKQGR), 209 to 220 (GRTRHRGQRPHV), and 255 to 265 (LGRKTRNKKKR).

Belongs to the universal ribosomal protein uL2 family. In terms of assembly, part of the 50S ribosomal subunit. Forms a bridge to the 30S subunit in the 70S ribosome.

One of the primary rRNA binding proteins. Required for association of the 30S and 50S subunits to form the 70S ribosome, for tRNA binding and peptide bond formation. It has been suggested to have peptidyltransferase activity; this is somewhat controversial. Makes several contacts with the 16S rRNA in the 70S ribosome. The chain is Large ribosomal subunit protein uL2 from Microcystis aeruginosa (strain NIES-843 / IAM M-2473).